The following is a 34-amino-acid chain: uncharacterized protein (34 aa).

The interval 1–34 (MRLRRLFKQPSTRVLGVTNCPRQQGHQKRREQPD) is disordered. Basic residues predominate over residues 25–34 (GHQKRREQPD).

This is an uncharacterized protein from Schizosaccharomyces pombe (strain 972 / ATCC 24843) (Fission yeast).